The chain runs to 159 residues: uncharacterized protein (159 aa).

Polar residues predominate over residues 1 to 13 (MTQPTRPSVTCDQ). Residues 1–57 (MTQPTRPSVTCDQGSSTIGGTAAQATTSSSATSGSNYQRDRLGRRPEIGVGGQPQIC) are disordered. A compositionally biased stretch (low complexity) spans 14–35 (GSSTIGGTAAQATTSSSATSGS). A compositionally biased stretch (basic and acidic residues) spans 38-47 (QRDRLGRRPE).

This is an uncharacterized protein from Homo sapiens (Human).